A 517-amino-acid polypeptide reads, in one-letter code: MLRFLAPRLLSLQGRTARYSSAAALPSPILNPDIPYNQLFINNEWQDAVSKKTFPTVNPTTGEVIGHVAEGDRADVDRAVKAAREAFRLGSPWRRMDASERGRLLNCLADLVERDRVYLASLETLDNGKPFQESYALDLDEVIKVYRYFAGWADKWHGKTIPMDGQHFCFTRHEPIGVCGQIIPWNFPLVMQGWKLAPALATGNTVVMKVAEQTPLSALYLASLIKEAGFPPGVVNIITGYGPTAGAAIAQHMDVDKVAFTGSTEVGHLIQKAAGDSNLKRVTLELGGKSPSIVLADADMEHAVEQCHEALFFNMGQCCCAGSRTFVEESIYNEFLERTVEKAKQRKVGNPFELDTQQGPQVDKEQFERVLGYIQLGQKEGAKLLCGGERFGERGFFIKPTVFGGVQDDMRIAKEEIFGPVQPLFKFKKMEEVIERANTTRYGLAAAVFTRDLDKAMYFTQALQAGTVWVNTYNIVTCHTPFGGFKESGNGRELGEDGLKAYTEVKTVTIKVPQKNS.

The transit peptide at 1–17 (MLRFLAPRLLSLQGRTA) directs the protein to the mitochondrion. Lysine 51 carries the N6-acetyllysine modification. N6-acetyllysine; alternate is present on lysine 52. Lysine 52 carries the post-translational modification N6-succinyllysine; alternate. Lysine 81 carries the N6-succinyllysine modification. 262–267 (GSTEVG) lines the NAD(+) pocket. Glutamate 285 serves as the catalytic Proton acceptor. Cysteine 319 (nucleophile) is an active-site residue. N6-acetyllysine; alternate occurs at positions 364, 383, 399, 414, and 426. An N6-succinyllysine; alternate mark is found at lysine 364, lysine 383, lysine 399, lysine 414, and lysine 426. Lysine 429 carries the N6-acetyllysine modification.

This sequence belongs to the aldehyde dehydrogenase family. In terms of assembly, homotetramer.

The protein resides in the mitochondrion matrix. It carries out the reaction an aldehyde + NAD(+) + H2O = a carboxylate + NADH + 2 H(+). The protein operates within alcohol metabolism; ethanol degradation; acetate from ethanol: step 2/2. In terms of biological role, ALDHs play a major role in the detoxification of alcohol-derived acetaldehyde. They are involved in the metabolism of corticosteroids, biogenic amines, neurotransmitters, and lipid peroxidation. The polypeptide is Aldehyde dehydrogenase X, mitochondrial (ALDH1B1) (Pongo abelii (Sumatran orangutan)).